Reading from the N-terminus, the 132-residue chain is RING-H2 finger protein ATL39 (132 aa).

Residues 10 to 30 (TIVFAFASIGFIAFYIINYYI) traverse the membrane as a helical segment. Residues 85–127 (CVVCLNEFKDDETLRLVPPCVHVFHADCVDIWLSHSSTCPICR) form an RING-type; atypical zinc finger.

It belongs to the RING-type zinc finger family. ATL subfamily.

Its subcellular location is the membrane. The catalysed reaction is S-ubiquitinyl-[E2 ubiquitin-conjugating enzyme]-L-cysteine + [acceptor protein]-L-lysine = [E2 ubiquitin-conjugating enzyme]-L-cysteine + N(6)-ubiquitinyl-[acceptor protein]-L-lysine.. It participates in protein modification; protein ubiquitination. The sequence is that of RING-H2 finger protein ATL39 (ATL39) from Arabidopsis thaliana (Mouse-ear cress).